The sequence spans 354 residues: Caffeic acid 3-O-methyltransferase (354 aa).

121-127 (MNQDKVL) contacts substrate. The interval 153–171 (AFEYHGKDQRFNKVFNSGM) is substrate binding. S-adenosyl-L-methionine is bound by residues glycine 199, aspartate 222, aspartate 242, methionine 243, and lysine 256. Catalysis depends on histidine 260, which acts as the Proton acceptor.

Belongs to the class I-like SAM-binding methyltransferase superfamily. Cation-independent O-methyltransferase family. COMT subfamily. As to quaternary structure, homodimer.

It catalyses the reaction (E)-caffeate + S-adenosyl-L-methionine = (E)-ferulate + S-adenosyl-L-homocysteine + H(+). Its pathway is aromatic compound metabolism; phenylpropanoid biosynthesis. In terms of biological role, catalyzes the conversion of caffeic acid to ferulic acid and of 5-hydroxyferulic acid to sinapic acid. The resulting products may subsequently be converted to the corresponding alcohols that are incorporated into lignins. The protein is Caffeic acid 3-O-methyltransferase of Zinnia elegans (Garden zinnia).